Consider the following 971-residue polypeptide: uncharacterized protein (971 aa).

13 helical membrane passes run 11 to 31 (WLLK…GIIF), 516 to 536 (FASS…ALGI), 547 to 567 (LALA…GGVV), 569 to 589 (VFSF…LITL), 615 to 635 (FFTM…VIYL), 651 to 671 (AITS…LFVS), 727 to 747 (LLFI…LYLG), 763 to 783 (STGI…YSLP), 795 to 815 (IALI…NFIF), 817 to 837 (IDQS…FFQA), 878 to 898 (IGSS…FGGI), 900 to 920 (GTIN…SVFV), and 923 to 943 (LPLF…YVQI).

Its subcellular location is the cell membrane. This is an uncharacterized protein from Mycoplasma pneumoniae (strain ATCC 29342 / M129 / Subtype 1) (Mycoplasmoides pneumoniae).